The chain runs to 542 residues: Prolyl 3-hydroxylase OGFOD1 (542 aa).

The region spanning 134–239 (DLESTIDMSC…RLSISGWFHG (106 aa)) is the Fe2OG dioxygenase domain. Fe cation contacts are provided by His-155 and Asp-157. Tyr-169 is a binding site for 2-oxoglutarate. His-218 serves as a coordination point for Fe cation. Arg-230 is a 2-oxoglutarate binding site. The interval 371 to 435 (SEDEPEDKKE…AKKESSVPTC (65 aa)) is disordered. Polar residues predominate over residues 395–417 (SHSSSEPENSWAATSDSSLQSEG).

This sequence belongs to the TPA1 family. Monomer. Fe(2+) serves as cofactor. Requires L-ascorbate as cofactor.

Its subcellular location is the cytoplasm. The protein localises to the nucleus. It carries out the reaction [ribosomal protein uS12]-L-proline + 2-oxoglutarate + O2 = [ribosomal protein uS12]-(3S)-3-hydroxy-L-proline + succinate + CO2. Functionally, prolyl 3-hydroxylase that catalyzes 3-hydroxylation of 'Pro-62' of small ribosomal subunit uS12 (RPS23), thereby regulating protein translation termination efficiency. Involved in stress granule formation. The polypeptide is Prolyl 3-hydroxylase OGFOD1 (OGFOD1) (Bos taurus (Bovine)).